We begin with the raw amino-acid sequence, 217 residues long: Elongation factor Ts (217 aa).

The involved in Mg(2+) ion dislocation from EF-Tu stretch occupies residues 80–83 (TDFV).

It belongs to the EF-Ts family.

It localises to the cytoplasm. In terms of biological role, associates with the EF-Tu.GDP complex and induces the exchange of GDP to GTP. It remains bound to the aminoacyl-tRNA.EF-Tu.GTP complex up to the GTP hydrolysis stage on the ribosome. The polypeptide is Elongation factor Ts (Carboxydothermus hydrogenoformans (strain ATCC BAA-161 / DSM 6008 / Z-2901)).